An 86-amino-acid polypeptide reads, in one-letter code: uncharacterized protein (86 aa).

This is an uncharacterized protein from Sus scrofa (Pig).